A 544-amino-acid polypeptide reads, in one-letter code: Serine/threonine-protein kinase PAK 1 (544 aa).

The tract at residues 1 to 79 (MSNNGLDVQD…KERPEISLPS (79 aa)) is disordered. At serine 2 the chain carries N-acetylserine. At serine 21 the chain carries Phosphoserine; by PKB and autocatalysis. Serine 57 bears the Phosphoserine; by autocatalysis mark. A compositionally biased stretch (basic and acidic residues) spans 68 to 79 (KEKERPEISLPS). The tract at residues 70-140 (KERPEISLPS…YNSKKTSNSQ (71 aa)) is autoregulatory region. The region spanning 75 to 88 (ISLPSDFEHTIHVG) is the CRIB domain. The segment at 75–105 (ISLPSDFEHTIHVGFDAVTGEFTGMPEQWAR) is GTPase-binding. A Phosphothreonine; by OXSR1 modification is found at threonine 84. Position 115 is a phosphoserine (serine 115). Phosphotyrosine occurs at positions 131 and 142. Phosphoserine; by autocatalysis is present on residues serine 144 and serine 149. Polar residues predominate over residues 150–166 (AEDYNSSNTLNVKTVSE). Residues 150–195 (AEDYNSSNTLNVKTVSETPAVPPVSEDEDDDDDATPPPVIAPRPEH) form a disordered region. Position 153 is a phosphotyrosine; by JAK2 (tyrosine 153). The residue at position 174 (serine 174) is a Phosphoserine. Over residues 174–183 (SEDEDDDDDA) the composition is skewed to acidic residues. Position 184 is a phosphothreonine (threonine 184). Serine 198 bears the Phosphoserine; by autocatalysis mark. Tyrosine 200 bears the Phosphotyrosine; by JAK2 mark. Serine 203 is subject to Phosphoserine; by autocatalysis. The tract at residues 209-250 (PVTPTRDVATSPISPTENNTTPPDALTRNTEKQKKKPKMSDE) is disordered. Threonine 211 and threonine 218 each carry phosphothreonine. 2 positions are modified to phosphoserine: serine 219 and serine 222. Residues 219–230 (SPISPTENNTTP) show a composition bias toward polar residues. 3 positions are modified to phosphothreonine: threonine 224, threonine 228, and threonine 229. Residues 269–520 (YTRFEKIGQG…AKELLQHQFL (252 aa)) enclose the Protein kinase domain. 275–283 (IGQGASGTV) is a binding site for ATP. Tyrosine 284 is modified (phosphotyrosine; by JAK2). Lysine 298 serves as a coordination point for ATP. Aspartate 388 functions as the Proton acceptor in the catalytic mechanism. Phosphothreonine; by autocatalysis, BRSK2 and PDPK1 is present on threonine 422.

This sequence belongs to the protein kinase superfamily. STE Ser/Thr protein kinase family. STE20 subfamily. As to quaternary structure, homodimer in its autoinhibited state. Active as monomer. Interacts with GIT1. Component of cytoplasmic complexes, which also contains PXN, ARHGEF7 and GIT1. Interacts with NISCH. Interacts with DVL1; mediates the formation of a DVL1, MUSK and PAK1 ternary complex involved in AChR clustering. Binds to the caspase-cleaved p110 isoform of CDC2L1 and CDC2L2, p110C, but not the full-length proteins. Interacts with ARHGEF7. Interacts with SCRIB. Interacts with PDPK1. Interacts (via kinase domain) with RAF1. Interacts with NCK1 and NCK2. Interacts with TBCB. Interacts with BRSK2. Interacts tightly with GTP-bound but not GDP-bound CDC42/P21 and RAC1. Interacts with SNAI1. Interacts with CIB1 (via N-terminal region); the interaction is direct, promotes PAK1 activity and occurs in a calcium-dependent manner. Interacts with INPP5K. Interacts with gamma-tubulin. Interacts with RHOU; the interaction promotes PAK1 activation. Mg(2+) serves as cofactor. Autophosphorylated in trans, meaning that in a dimer, one kinase molecule phosphorylates the other one. Activated by autophosphorylation at Thr-422 in response to a conformation change, triggered by interaction with GTP-bound CDC42 or RAC1. Activated by phosphorylation at Thr-422 by PDPK1. Phosphorylated by JAK2 in response to PRL; this increases PAK1 kinase activity. Phosphorylated at Ser-21 by PKB/AKT; this reduces interaction with NCK1 and association with focal adhesion sites. Activated by phosphorylation at Thr-422 by BRSK2. Upon DNA damage, phosphorylated at Thr-211 and translocates to the nucleoplasm. Phosphorylated at tyrosine residues, which can be enhanced by NTN1. In terms of tissue distribution, expressed predominantly in the brain, with higher expression in neuronal groups associated with motor function, and at lower levels in the spleen.

It localises to the cytoplasm. It is found in the cell junction. Its subcellular location is the focal adhesion. The protein localises to the cell projection. The protein resides in the lamellipodium. It localises to the cell membrane. It is found in the ruffle membrane. Its subcellular location is the invadopodium. The protein localises to the nucleus. The protein resides in the nucleoplasm. It localises to the chromosome. It is found in the cytoskeleton. Its subcellular location is the microtubule organizing center. The protein localises to the centrosome. It carries out the reaction L-seryl-[protein] + ATP = O-phospho-L-seryl-[protein] + ADP + H(+). The enzyme catalyses L-threonyl-[protein] + ATP = O-phospho-L-threonyl-[protein] + ADP + H(+). Its activity is regulated as follows. Phosphorylation of Thr-84 by OXSR1 inhibits activation. Activated by binding small G proteins. Binding of GTP-bound CDC42 or RAC1 to the autoregulatory region releases monomers from the autoinhibited dimer, and enables activation by phosphorylation of Thr-422. Protein kinase involved in intracellular signaling pathways downstream of integrins and receptor-type kinases that plays an important role in cytoskeleton dynamics, in cell adhesion, migration, proliferation, apoptosis, mitosis, and in vesicle-mediated transport processes. Can directly phosphorylate BAD and protects cells against apoptosis. Activated by interaction with CDC42 and RAC1. Functions as a GTPase effector that links the Rho-related GTPases CDC42 and RAC1 to the JNK MAP kinase pathway. Phosphorylates and activates MAP2K1, and thereby mediates activation of downstream MAP kinases. Involved in the reorganization of the actin cytoskeleton, actin stress fibers and of focal adhesion complexes. Phosphorylates the tubulin chaperone TBCB and thereby plays a role in the regulation of microtubule biogenesis and organization of the tubulin cytoskeleton. Plays a role in the regulation of insulin secretion in response to elevated glucose levels. Part of a ternary complex that contains PAK1, DVL1 and MUSK that is important for MUSK-dependent regulation of AChR clustering during the formation of the neuromuscular junction (NMJ). Activity is inhibited in cells undergoing apoptosis, potentially due to binding of CDC2L1 and CDC2L2. Phosphorylates MYL9/MLC2. Phosphorylates RAF1 at 'Ser-338' and 'Ser-339' resulting in: activation of RAF1, stimulation of RAF1 translocation to mitochondria, phosphorylation of BAD by RAF1, and RAF1 binding to BCL2. Phosphorylates SNAI1 at 'Ser-246' promoting its transcriptional repressor activity by increasing its accumulation in the nucleus. In podocytes, promotes NR3C2 nuclear localization. Required for atypical chemokine receptor ACKR2-induced phosphorylation of LIMK1 and cofilin (CFL1) and for the up-regulation of ACKR2 from endosomal compartment to cell membrane, increasing its efficiency in chemokine uptake and degradation. In synapses, seems to mediate the regulation of F-actin cluster formation performed by SHANK3, maybe through CFL1 phosphorylation and inactivation. Plays a role in RUFY3-mediated facilitating gastric cancer cells migration and invasion. In response to DNA damage, phosphorylates MORC2 which activates its ATPase activity and facilitates chromatin remodeling. In neurons, plays a crucial role in regulating GABA(A) receptor synaptic stability and hence GABAergic inhibitory synaptic transmission through its role in F-actin stabilization. In hippocampal neurons, necessary for the formation of dendritic spines and excitatory synapses; this function is dependent on kinase activity and may be exerted by the regulation of actomyosin contractility through the phosphorylation of myosin II regulatory light chain (MLC). Along with GIT1, positively regulates microtubule nucleation during interphase. Phosphorylates FXR1, promoting its localization to stress granules and activity. Phosphorylates ILK on 'Thr-173' and 'Ser-246', promoting nuclear export of ILK. In Rattus norvegicus (Rat), this protein is Serine/threonine-protein kinase PAK 1.